Consider the following 172-residue polypeptide: Ribosome maturation factor RimM (172 aa).

The PRC barrel domain maps to Asp-96 to Leu-168.

This sequence belongs to the RimM family. As to quaternary structure, binds ribosomal protein uS19.

The protein resides in the cytoplasm. Functionally, an accessory protein needed during the final step in the assembly of 30S ribosomal subunit, possibly for assembly of the head region. Essential for efficient processing of 16S rRNA. May be needed both before and after RbfA during the maturation of 16S rRNA. It has affinity for free ribosomal 30S subunits but not for 70S ribosomes. This Streptococcus thermophilus (strain CNRZ 1066) protein is Ribosome maturation factor RimM.